We begin with the raw amino-acid sequence, 146 residues long: Large ribosomal subunit protein uL15 (146 aa).

The interval Met-1 to Gly-56 is disordered. Over residues Arg-24 to Ala-34 the composition is skewed to gly residues.

Belongs to the universal ribosomal protein uL15 family. As to quaternary structure, part of the 50S ribosomal subunit.

Functionally, binds to the 23S rRNA. The chain is Large ribosomal subunit protein uL15 from Bordetella bronchiseptica (strain ATCC BAA-588 / NCTC 13252 / RB50) (Alcaligenes bronchisepticus).